Consider the following 358-residue polypeptide: Trace amine-associated receptor 7a (358 aa).

Residues 1 to 47 (MDKLVDHFLSDQSRTMNEDLFSATSTELCYENLNRSCVRSPYSPGPR) are Extracellular-facing. An N-linked (GlcNAc...) asparagine glycan is attached at N34. 2 cysteine pairs are disulfide-bonded: C37/C201 and C120/C205. Residues 48–68 (LILYAVFGFGAALAVCGNLLV) traverse the membrane as a helical segment. Topologically, residues 69-83 (MTSILHFRQLHSPAN) are cytoplasmic. A helical membrane pass occupies residues 84-104 (FLVASLACADFLVGLTVMPFS). At 105 to 121 (TVRSVEGCWYFGESYCK) the chain is on the extracellular side. Residues 122-143 (FHSCFEGSFCYSSIFHLCFISV) traverse the membrane as a helical segment. Residues 144–166 (DRYIAVSDPLTYPTRFTASVSGK) are Cytoplasmic-facing. The chain crosses the membrane as a helical span at residues 167 to 187 (CITFSWLLSIIYSFSLLYTGA). Topologically, residues 188–212 (NEAGLEDLVSVLTCVGGCQIAVNQS) are extracellular. Residue N210 is glycosylated (N-linked (GlcNAc...) asparagine). A helical transmembrane segment spans residues 213–233 (WVFINFLLFLIPTLVMMTVYS). Residues 234–274 (KIFLIAKQQAQNIEKMSKQTARASESYKDRVAKRERKAAKT) are Cytoplasmic-facing. A helical membrane pass occupies residues 275–295 (LGIAVAAFLLSWLPYFIDSII). Residues 296–309 (DAFLGFITPTYVYE) lie on the Extracellular side of the membrane. Residues 310 to 333 (ILVWIAYYNSAMNPLIYAFFYPWF) form a helical membrane-spanning segment. Residues 334–358 (RKAIKLIVTGKILRENSSTTNLFPE) lie on the Cytoplasmic side of the membrane.

It belongs to the G-protein coupled receptor 1 family. In terms of tissue distribution, specifically expressed in neurons of the olfactory epithelium.

The protein localises to the cell membrane. Olfactory receptor specific for N,N-dimethylalkylamines trace amines. Trace amine compounds are enriched in animal body fluids and act on trace amine-associated receptors (TAARs) to elicit both intraspecific and interspecific innate behaviors. Ligand-binding causes a conformation change that triggers signaling via G(s)-class of G alpha proteins (GNAL or GNAS). This Mus musculus (Mouse) protein is Trace amine-associated receptor 7a.